The primary structure comprises 508 residues: Aromatic-L-amino-acid decarboxylase (508 aa).

Thr-82 lines the substrate pocket. Pyridoxal 5'-phosphate-binding residues include Ala-148 and Ser-149. His-192 provides a ligand contact to substrate. Thr-246 and Asn-300 together coordinate pyridoxal 5'-phosphate. At Lys-303 the chain carries N6-(pyridoxal phosphate)lysine.

The protein belongs to the group II decarboxylase family. As to quaternary structure, homodimer. The cofactor is pyridoxal 5'-phosphate.

It carries out the reaction L-dopa + H(+) = dopamine + CO2. It catalyses the reaction 5-hydroxy-L-tryptophan + H(+) = serotonin + CO2. Its function is as follows. Catalyzes the decarboxylation of L-3,4-dihydroxyphenylalanine (DOPA) to dopamine, L-5-hydroxytryptophan to serotonin and L-tryptophan to tryptamine. This is Aromatic-L-amino-acid decarboxylase (Ddc) from Manduca sexta (Tobacco hawkmoth).